The sequence spans 136 residues: Small ribosomal subunit protein uS9 (136 aa).

The protein belongs to the universal ribosomal protein uS9 family.

The protein is Small ribosomal subunit protein uS9 of Borrelia duttonii (strain Ly).